Reading from the N-terminus, the 87-residue chain is uncharacterized protein (87 aa).

This sequence belongs to the YlmC/YmxH family.

This is an uncharacterized protein from Clostridium acetobutylicum (strain ATCC 824 / DSM 792 / JCM 1419 / IAM 19013 / LMG 5710 / NBRC 13948 / NRRL B-527 / VKM B-1787 / 2291 / W).